A 140-amino-acid chain; its full sequence is Nucleoside diphosphate kinase (140 aa).

Residues lysine 11, phenylalanine 59, arginine 87, threonine 93, arginine 104, and asparagine 114 each contribute to the ATP site. Histidine 117 functions as the Pros-phosphohistidine intermediate in the catalytic mechanism.

It belongs to the NDK family. In terms of assembly, homotetramer. It depends on Mg(2+) as a cofactor.

Its subcellular location is the cytoplasm. It carries out the reaction a 2'-deoxyribonucleoside 5'-diphosphate + ATP = a 2'-deoxyribonucleoside 5'-triphosphate + ADP. The enzyme catalyses a ribonucleoside 5'-diphosphate + ATP = a ribonucleoside 5'-triphosphate + ADP. In terms of biological role, major role in the synthesis of nucleoside triphosphates other than ATP. The ATP gamma phosphate is transferred to the NDP beta phosphate via a ping-pong mechanism, using a phosphorylated active-site intermediate. The sequence is that of Nucleoside diphosphate kinase from Rhodopseudomonas palustris (strain BisA53).